Reading from the N-terminus, the 435-residue chain is U-box domain-containing protein 21 (435 aa).

A U-box domain is found at 30–104; sequence TIPPEFQCPI…QGWCVEKGSP (75 aa). 4 ARM repeats span residues 202-241, 245-285, 288-327, and 329-369; these read LEGISKLASATSFRCVAGLLKSTDDSVRQNAAFIMKEILS, TRVH…QMVL, PEIASEFLEIGLVSITVEMIVDAENSVCEKALAVLDAICE, and EHGR…KLWK.

It carries out the reaction S-ubiquitinyl-[E2 ubiquitin-conjugating enzyme]-L-cysteine + [acceptor protein]-L-lysine = [E2 ubiquitin-conjugating enzyme]-L-cysteine + N(6)-ubiquitinyl-[acceptor protein]-L-lysine.. It participates in protein modification; protein ubiquitination. Functionally, functions as an E3 ubiquitin ligase. The chain is U-box domain-containing protein 21 (PUB21) from Arabidopsis thaliana (Mouse-ear cress).